An 83-amino-acid chain; its full sequence is ATP synthase subunit c 2 (83 aa).

Helical transmembrane passes span 8-28 and 58-78; these read IASILGAAFAVGIGSLGPALG and LAMIETMAIYCLVIALLLLFA.

The protein belongs to the ATPase C chain family. F-type ATPases have 2 components, F(1) - the catalytic core - and F(0) - the membrane proton channel. F(1) has five subunits: alpha(3), beta(3), gamma(1), delta(1), epsilon(1). F(0) has four main subunits: a(1), b(1), b'(1) and c(10-14). The alpha and beta chains form an alternating ring which encloses part of the gamma chain. F(1) is attached to F(0) by a central stalk formed by the gamma and epsilon chains, while a peripheral stalk is formed by the delta, b and b' chains.

Its subcellular location is the cell inner membrane. Its function is as follows. F(1)F(0) ATP synthase produces ATP from ADP in the presence of a proton or sodium gradient. F-type ATPases consist of two structural domains, F(1) containing the extramembraneous catalytic core and F(0) containing the membrane proton channel, linked together by a central stalk and a peripheral stalk. During catalysis, ATP synthesis in the catalytic domain of F(1) is coupled via a rotary mechanism of the central stalk subunits to proton translocation. Functionally, key component of the F(0) channel; it plays a direct role in translocation across the membrane. A homomeric c-ring of between 10-14 subunits forms the central stalk rotor element with the F(1) delta and epsilon subunits. The sequence is that of ATP synthase subunit c 2 from Cereibacter sphaeroides (strain ATCC 17029 / ATH 2.4.9) (Rhodobacter sphaeroides).